The chain runs to 956 residues: Probable hypoxanthine oxidase XdhD (956 aa).

Residues Gln414, Phe445, and Ala727 each contribute to the Mo-molybdopterin site.

The protein belongs to the xanthine dehydrogenase family. It depends on [2Fe-2S] cluster as a cofactor. The cofactor is Mo-molybdopterin.

Functionally, probably has no xanthine dehydrogenase activity; however deletion results in increased adenine sensitivity, suggesting that this protein contributes to the conversion of adenine to guanine nucleotides during purine salvage. This is Probable hypoxanthine oxidase XdhD (xdhD) from Escherichia coli (strain K12).